We begin with the raw amino-acid sequence, 206 residues long: Cytochrome c oxidase assembly protein CtaG (206 aa).

The Cytoplasmic portion of the chain corresponds to Met1–Val22. A helical; Signal-anchor for type II membrane protein transmembrane segment spans residues Ala23–Phe43. Residues Tyr44–Leu206 lie on the Periplasmic side of the membrane.

It belongs to the COX11/CtaG family.

Its subcellular location is the cell inner membrane. Functionally, exerts its effect at some terminal stage of cytochrome c oxidase synthesis, probably by being involved in the insertion of the copper B into subunit I. The polypeptide is Cytochrome c oxidase assembly protein CtaG (Rhodopseudomonas palustris (strain BisB18)).